Reading from the N-terminus, the 27-residue chain is AnmTX Sco 9a-1 (27 aa).

Position 6 is a hydroxyproline (P6). Intrachain disulfides connect C7-C18 and C10-C25.

Its function is as follows. Has analgesic and anti-inflammatory activity in vivo. At a dose of 0.1 and 1 mg/kg, exhibits anti-inflammatory activity by reducing the volume of edema during 24 h better than the nonsteroidal anti-inflammatory drug, Diclofenac, at dose of 1 mg/kg in a mouse model of acute local lambda-carrageenan-induced inflammation. At a dose of 1 mg/kg, reduces the content of tumor necrosis factor-alpha (TNF-alpha). Demonstrates a significant analgesic effect on acute pain sensitivity in the carrageenan-induced thermal hyperalgesia model at doses of 0.1 and 1 mg/kg. Not toxic in mice, however stimulates exploratory motivation and active search behavior, and demonstrates an anti-anxiety effect. Does not exhibit any effect on currents of rat acid-sensing ion channels ASIC1a or ASIC3. In Stomphia coccinea (Spotted swimming anemone), this protein is AnmTX Sco 9a-1.